Consider the following 305-residue polypeptide: Ribosomal RNA small subunit methyltransferase H (305 aa).

S-adenosyl-L-methionine-binding positions include 30-32 (GGH), Asp49, Phe74, Asp96, and Gln103.

Belongs to the methyltransferase superfamily. RsmH family.

The protein resides in the cytoplasm. The catalysed reaction is cytidine(1402) in 16S rRNA + S-adenosyl-L-methionine = N(4)-methylcytidine(1402) in 16S rRNA + S-adenosyl-L-homocysteine + H(+). In terms of biological role, specifically methylates the N4 position of cytidine in position 1402 (C1402) of 16S rRNA. This is Ribosomal RNA small subunit methyltransferase H from Francisella tularensis subsp. novicida (strain U112).